The sequence spans 381 residues: ATP synthase subunit a (381 aa).

The interval 24-73 is disordered; the sequence is PVAAPVEQHGQAPEAAPDAHGSPAGEPGAAVEAHAAAAEHGEAAGHEGGH. Positions 47–59 are enriched in low complexity; that stretch reads AGEPGAAVEAHAA. The segment covering 60–73 has biased composition (basic and acidic residues); it reads AAEHGEAAGHEGGH. Transmembrane regions (helical) follow at residues 128–148, 190–210, 215–235, 255–275, 290–310, and 316–336; these read KHVVMMWLASALLLVVVLGAV, LVTAFFFILFLNLFGLLPFSA, NLSVTVAMALFTFVITQYAAI, LAPLWLIMIPVEFLGLFTKPF, FVILALLGLIFALGTPWVAFG, and LSIFLLELFVAFVQAYIFTML. The span at 351 to 360 shows a compositional bias: basic and acidic residues; that stretch reads DHGHAEEHGH. The disordered stretch occupies residues 351–381; the sequence is DHGHAEEHGHAGPAAGSEHGSHVAGASPGHG.

The protein belongs to the ATPase A chain family. F-type ATPases have 2 components, CF(1) - the catalytic core - and CF(0) - the membrane proton channel. CF(1) has five subunits: alpha(3), beta(3), gamma(1), delta(1), epsilon(1). CF(0) has three main subunits: a(1), b(2) and c(9-12). The alpha and beta chains form an alternating ring which encloses part of the gamma chain. CF(1) is attached to CF(0) by a central stalk formed by the gamma and epsilon chains, while a peripheral stalk is formed by the delta and b chains.

It is found in the cell inner membrane. Functionally, key component of the proton channel; it plays a direct role in the translocation of protons across the membrane. The chain is ATP synthase subunit a from Anaeromyxobacter dehalogenans (strain 2CP-C).